A 609-amino-acid chain; its full sequence is MQQSQRLSQMLFVTLREDPVEAELPSHKLLLRGCFIRRLSPGIYTYLPLLWRVLQKISEIVRQEMNAIGGQECLLPQLQPAEIWRESGRWDVYTQAEGIMFALKDRQGREQSLGPTHEEVITLLARDLIRSYRQLPQTLYQIQTKFRDEIRPRFGLMRGREFIMKDAYSFHANEESLRQTYQDMYRAYSRILRRCGLEFRVVDADAGAIGGPSAASQEFMVLASAGEDEILYTPDGSYAANVEKAVSIPPPAAESPYTAFQVLDTPGTETIEKLAAFLKISSTLIVKNVLYQALYDNGLRVAVLLSIRGDQEVNEVKLANHLSRLAERYQASKLLKLALADAEIQNSWQGDPIPVGYIAPDLPDSCLGRQKNLAPQILRLADQTAALLQNFVTGGNQVGQHVVGANWGEQYPLPEVVDVRKAQAGDRCLLNPDQILETARGIEIGHIFQLGLKFSLPMRATFTDEQGSEQPLWMGCYGIGVSRLAQAAVEQSHDANGIIWPVAIAPYHVVVVVPNISDPEQMSVAEKLVQDLATAGIETLWDDRDERAGVKFKDADLIGIPYRITTGRSLKQGKVELTERASGQATEIPIEEVVTTLKERIEAALAVPD.

This sequence belongs to the class-II aminoacyl-tRNA synthetase family. ProS type 1 subfamily. In terms of assembly, homodimer.

The protein resides in the cytoplasm. The enzyme catalyses tRNA(Pro) + L-proline + ATP = L-prolyl-tRNA(Pro) + AMP + diphosphate. Functionally, catalyzes the attachment of proline to tRNA(Pro) in a two-step reaction: proline is first activated by ATP to form Pro-AMP and then transferred to the acceptor end of tRNA(Pro). As ProRS can inadvertently accommodate and process non-cognate amino acids such as alanine and cysteine, to avoid such errors it has two additional distinct editing activities against alanine. One activity is designated as 'pretransfer' editing and involves the tRNA(Pro)-independent hydrolysis of activated Ala-AMP. The other activity is designated 'posttransfer' editing and involves deacylation of mischarged Ala-tRNA(Pro). The misacylated Cys-tRNA(Pro) is not edited by ProRS. In Synechococcus sp. (strain JA-2-3B'a(2-13)) (Cyanobacteria bacterium Yellowstone B-Prime), this protein is Proline--tRNA ligase.